Here is a 236-residue protein sequence, read N- to C-terminus: Ribosome assembly factor mrt4 (236 aa).

This sequence belongs to the universal ribosomal protein uL10 family. Associates with the pre-60S ribosomal particle.

It is found in the nucleus. It localises to the nucleolus. Its subcellular location is the cytoplasm. Its function is as follows. Component of the ribosome assembly machinery. Nuclear paralog of the ribosomal protein P0, it binds pre-60S subunits at an early stage of assembly in the nucleolus, and is replaced by P0 in cytoplasmic pre-60S subunits and mature 80S ribosomes. The polypeptide is Ribosome assembly factor mrt4 (Eremothecium gossypii (strain ATCC 10895 / CBS 109.51 / FGSC 9923 / NRRL Y-1056) (Yeast)).